Consider the following 1648-residue polypeptide: eIF-2-alpha kinase GCN2 (1648 aa).

A disordered region spans residues 1–26; sequence MAGGRGASGRGRAEPQESYSQRQDHE. An RWD domain is found at 25–137; that stretch reads HELQALEAIY…HHVQSFLSEH (113 aa). A coiled-coil region spans residues 146 to 205; it reads HEEMLERQAQEKQQRLLEARRKEEQEQREILHEIQRRKEEIKEEKKRKEMAKQERLEITS. Residue S230 is modified to Phosphoserine. Protein kinase domains follow at residues 286–538 and 589–1000; these read VGSD…HSFI and FEEL…SELL. Residues 595 to 603 and K618 contribute to the ATP site; that span reads LGKGAFGAV. Positions 661 to 784 are disordered; sequence PAVPGTPPPD…CNQKDGSHEI (124 aa). The residue at position 666 (T666) is a Phosphothreonine. Polar residues-rich tracts occupy residues 673 to 686 and 704 to 722; these read PQAQ…GKTS and LSSS…STRF. Acidic residues-rich tracts occupy residues 730–739 and 753–763; these read SSDEEDEDER and SDSDIIFDNED. Over residues 775–784 the composition is skewed to basic and acidic residues; that stretch reads CNQKDGSHEI. Residue D846 is the Proton acceptor of the active site. At T869 the chain carries Phosphothreonine. T898 and T903 each carry phosphothreonine; by autocatalysis. The tract at residues 1021–1492 is histidyl-tRNA synthetase-like; the sequence is IDGKAYRTMM…DHVMQKLRTK (472 aa). An N6-acetyllysine modification is found at K1258.

This sequence belongs to the protein kinase superfamily. Ser/Thr protein kinase family. GCN2 subfamily. In terms of assembly, homodimer; homodimerization is important for kinase activation by uncharged tRNAs. Interacts with GCN1; this interaction stimulates EIF2AK4/GCN2 kinase activity and is impaired by IMPACT upon a variety of stress conditions, such as amino acid depletion, UV-C irradiation, proteasome inhibitor treatment and glucose deprivation. Interacts with DNAJC3; this interaction inhibits EIF2AK4/GCN2 kinase activity during endoplasmic reticulum (ER), hypothermic and amino acid-starving stress conditions. Interacts with MAP3K20; activates EIF2AK4/GCN2 kinase activity in response to moderate ribotoxic stress. In terms of processing, autophosphorylated; autophosphorylation on Thr-898 is increased upon amino acid starvation and in UV irradiation cells and inhibited in presence of IMPACT. As to expression, expressed in liver. Expressed predominantly in the hippocampal CA1 region and the dentate gyrus, and to a lesser degree in CA3 (at protein level). Expressed in liver, lung, brain, kidney, skeletal muscle and testis. Expressed weakly in heart and spleen. Expressed in the hippocampal CA1 and CA3 regions, the dentate gyrus and cerebellum. Isoform 1 is widely expressed. Isoform 1 is expressed in brain, liver, skeletal muscle and testis. Isoform 3 is expressed in lung, brain, testis, prostate and choroid plexus. Isoform 4 is expressed in muscle, lung, kidney, brain, testis and prostate.

It localises to the cytoplasm. It carries out the reaction L-seryl-[protein] + ATP = O-phospho-L-seryl-[protein] + ADP + H(+). It catalyses the reaction L-threonyl-[protein] + ATP = O-phospho-L-threonyl-[protein] + ADP + H(+). (Microbial infection) Kinase activity is enhanced by alphavirus genomic RNA sequences. Kinase activity is stimulated upon binding to uncharged tRNAs. Activated by serum starvation (in vitro). Functionally, metabolic-stress sensing protein kinase that phosphorylates the alpha subunit of eukaryotic translation initiation factor 2 (EIF2S1/eIF-2-alpha) in response to low amino acid availability. Plays a role as an activator of the integrated stress response (ISR) required for adaptation to amino acid starvation. EIF2S1/eIF-2-alpha phosphorylation in response to stress converts EIF2S1/eIF-2-alpha into a global protein synthesis inhibitor, leading to a global attenuation of cap-dependent translation, and thus to a reduced overall utilization of amino acids, while concomitantly initiating the preferential translation of ISR-specific mRNAs, such as the transcriptional activator ATF4, and hence allowing ATF4-mediated reprogramming of amino acid biosynthetic gene expression to alleviate nutrient depletion. Required for the translational induction of protein kinase PRKCH following amino acid starvation. Binds uncharged tRNAs. Involved in cell cycle arrest by promoting cyclin D1 mRNA translation repression after the unfolded protein response pathway (UPR) activation or cell cycle inhibitor CDKN1A/p21 mRNA translation activation in response to amino acid deprivation. Plays a role in the consolidation of synaptic plasticity, learning as well as formation of long-term memory. Plays a role in neurite outgrowth inhibition. Plays a role in feeding behavior to maintain amino acid homeostasis; contributes to the innate aversion toward diets of imbalanced amino acid composition. Plays a proapoptotic role in response to glucose deprivation. Promotes global cellular protein synthesis repression in response to UV irradiation independently of the stress-activated protein kinase/c-Jun N-terminal kinase (SAPK/JNK) and p38 MAPK signaling pathways. Its function is as follows. (Microbial infection) Plays a role in the antiviral response against alphavirus infection; impairs early viral mRNA translation of the incoming genomic virus RNA, thus preventing alphavirus replication. In terms of biological role, (Microbial infection) Plays a role in modulating the adaptive immune response to Yellow fever virus infection; promotes dendritic cells to initiate autophagy and antigene presentation to both CD4(+) and CD8(+) T-cells under amino acid starvation. In Mus musculus (Mouse), this protein is eIF-2-alpha kinase GCN2.